We begin with the raw amino-acid sequence, 393 residues long: NAD(P)H-quinone oxidoreductase subunit H, chloroplastic (393 aa).

Belongs to the complex I 49 kDa subunit family. NDH is composed of at least 16 different subunits, 5 of which are encoded in the nucleus.

It is found in the plastid. Its subcellular location is the chloroplast thylakoid membrane. It carries out the reaction a plastoquinone + NADH + (n+1) H(+)(in) = a plastoquinol + NAD(+) + n H(+)(out). The catalysed reaction is a plastoquinone + NADPH + (n+1) H(+)(in) = a plastoquinol + NADP(+) + n H(+)(out). In terms of biological role, NDH shuttles electrons from NAD(P)H:plastoquinone, via FMN and iron-sulfur (Fe-S) centers, to quinones in the photosynthetic chain and possibly in a chloroplast respiratory chain. The immediate electron acceptor for the enzyme in this species is believed to be plastoquinone. Couples the redox reaction to proton translocation, and thus conserves the redox energy in a proton gradient. The chain is NAD(P)H-quinone oxidoreductase subunit H, chloroplastic from Solanum tuberosum (Potato).